The sequence spans 371 residues: Transaldolase (371 aa).

Lysine 140 functions as the Schiff-base intermediate with substrate in the catalytic mechanism.

Belongs to the transaldolase family. Type 2 subfamily.

The protein localises to the cytoplasm. The enzyme catalyses D-sedoheptulose 7-phosphate + D-glyceraldehyde 3-phosphate = D-erythrose 4-phosphate + beta-D-fructose 6-phosphate. It functions in the pathway carbohydrate degradation; pentose phosphate pathway; D-glyceraldehyde 3-phosphate and beta-D-fructose 6-phosphate from D-ribose 5-phosphate and D-xylulose 5-phosphate (non-oxidative stage): step 2/3. Functionally, transaldolase is important for the balance of metabolites in the pentose-phosphate pathway. The polypeptide is Transaldolase (Arthrobacter sp. (strain FB24)).